The primary structure comprises 685 residues: Cilia- and flagella-associated protein 36 (685 aa).

The interval 1-20 (MLRRFSKKNKNPEGGSDDAS) is disordered. Positions 197 to 242 (SEELEMMAQNSRIQREALEQEIRKEEILLQQALDEGARAQNQNQNQ) form a coiled coil. The segment covering 287 to 310 (TGTMTSSTGVSVGTLTNTGVSSGT) has biased composition (low complexity). The segment at 287–573 (TGTMTSSTGV…LRGNKYDGDV (287 aa)) is disordered. Residues 363–372 (EAEKSKRERP) are compositionally biased toward basic and acidic residues. Over residues 410-434 (GTTSKKSIATVTASPEMSSKTTQME) the composition is skewed to polar residues. 2 stretches are compositionally biased toward basic and acidic residues: residues 439–456 (GEGK…ERKY) and 508–557 (HEPR…ESKP).

The protein belongs to the CFAP36 family. As to expression, expressed in amphid and phasmid ciliated neurons.

Its subcellular location is the cell projection. The protein localises to the cilium. It is found in the cytoplasm. The protein resides in the cytoskeleton. It localises to the cilium axoneme. In Caenorhabditis elegans, this protein is Cilia- and flagella-associated protein 36.